A 425-amino-acid chain; its full sequence is ADP-ribose glycohydrolase MACROD2 (425 aa).

The Macro domain maps to 59–240 (QETSQVKKSL…IYKKKMNEFF (182 aa)). Residues 77-79 (GDI), 90-92 (AAN), and 97-102 (GGGGVD) contribute to the substrate site. A Glycyl lysine isopeptide (Lys-Gly) (interchain with G-Cter in ubiquitin) cross-link involves residue Lys-170. Residues 185–191 (ISTGIYG) and Phe-224 each bind substrate. Residues 243 to 425 (DDNNEEEEDV…EAKEQRNGTK (183 aa)) are disordered. Over residues 244-262 (DNNEEEEDVEMKEDSDENG) the composition is skewed to acidic residues. A compositionally biased stretch (basic and acidic residues) spans 302 to 343 (EDFAKDENITKGGEVTDHSVRDQDHPDGQENDSTKNEIKIET). Over residues 344 to 360 (ESQSSYMETEELSSNQE) the composition is skewed to polar residues. Basic and acidic residues-rich tracts occupy residues 381–391 (EGEKAPGEDTP) and 415–425 (DEAKEQRNGTK).

It belongs to the MacroD-type family. MacroD1/2-like subfamily. Interacts with ADP-ribosylated PARP1.

The protein resides in the nucleus. The enzyme catalyses 2''-O-acetyl-ADP-D-ribose + H2O = ADP-D-ribose + acetate + H(+). It carries out the reaction 4-O-(ADP-D-ribosyl)-L-aspartyl-[protein] + H2O = L-aspartyl-[protein] + ADP-D-ribose + H(+). It catalyses the reaction 5-O-(ADP-D-ribosyl)-L-glutamyl-[protein] + H2O = L-glutamyl-[protein] + ADP-D-ribose + H(+). The catalysed reaction is alpha-NAD(+) + H2O = ADP-D-ribose + nicotinamide + H(+). With respect to regulation, subject to product inhibition by ADP-ribose. Its function is as follows. Removes ADP-ribose from aspartate and glutamate residues in proteins bearing a single ADP-ribose moiety. Inactive towards proteins bearing poly-ADP-ribose. Deacetylates O-acetyl-ADP ribose, a signaling molecule generated by the deacetylation of acetylated lysine residues in histones and other proteins. The sequence is that of ADP-ribose glycohydrolase MACROD2 from Homo sapiens (Human).